The following is a 201-amino-acid chain: MELLKEAIRKRGSVLSSGVLKVDQFLNHQVDTNLMSAIGEEFARLFADEHVTKVVTIESSGIAPSFMCAHSLQVPLIFARKKKSVTMDKENVYSSRVYSFTKKEYSEVTVSKDWLCPGDRVLIIDDFLANGQAATGLTQIVEEAGATVAGIGIVIEKSFQDGRALLEGKGYRIESLARISSLEGNKVQFVEESAHFAYNKS.

Residues Leu20 and Asn27 each contribute to the xanthine site. 129-133 (ANGQA) is a binding site for 5-phospho-alpha-D-ribose 1-diphosphate. Lys157 contributes to the xanthine binding site.

It belongs to the purine/pyrimidine phosphoribosyltransferase family. Xpt subfamily. Homodimer.

The protein resides in the cytoplasm. It carries out the reaction XMP + diphosphate = xanthine + 5-phospho-alpha-D-ribose 1-diphosphate. It participates in purine metabolism; XMP biosynthesis via salvage pathway; XMP from xanthine: step 1/1. Its function is as follows. Converts the preformed base xanthine, a product of nucleic acid breakdown, to xanthosine 5'-monophosphate (XMP), so it can be reused for RNA or DNA synthesis. The protein is Xanthine phosphoribosyltransferase of Shouchella clausii (strain KSM-K16) (Alkalihalobacillus clausii).